The sequence spans 131 residues: MLYELIGLVRITNSNAPKLEAKELSSTIGKLIIQNRGVVRDIVPMGIRYLPKIMKKDQEKHFRAYHFLMLFDSSAAVQSEILRTLKKDPRVIRSSIVKVDLDKQLDRASSLHRSLGKKSILELVNEDYQSI.

This sequence belongs to the bacterial ribosomal protein bS6 family. In terms of assembly, component of the mitochondrial small ribosomal subunit (mt-SSU). Mature yeast 74S mitochondrial ribosomes consist of a small (37S) and a large (54S) subunit. The 37S small subunit contains a 15S ribosomal RNA (15S mt-rRNA) and 34 different proteins. The 54S large subunit contains a 21S rRNA (21S mt-rRNA) and 46 different proteins.

The protein resides in the mitochondrion. Component of the mitochondrial ribosome (mitoribosome), a dedicated translation machinery responsible for the synthesis of mitochondrial genome-encoded proteins, including at least some of the essential transmembrane subunits of the mitochondrial respiratory chain. The mitoribosomes are attached to the mitochondrial inner membrane and translation products are cotranslationally integrated into the membrane. This Saccharomyces cerevisiae (strain ATCC 204508 / S288c) (Baker's yeast) protein is Small ribosomal subunit protein bS6m (MRP17).